We begin with the raw amino-acid sequence, 173 residues long: Co-chaperone protein HscB (173 aa).

In terms of domain architecture, J spans 2–74 (DYFTLFGLPA…LKRAEYMLSQ (73 aa)).

It belongs to the HscB family. In terms of assembly, interacts with HscA and stimulates its ATPase activity. Interacts with IscU.

Co-chaperone involved in the maturation of iron-sulfur cluster-containing proteins. Seems to help targeting proteins to be folded toward HscA. In Xenorhabdus nematophila (strain ATCC 19061 / DSM 3370 / CCUG 14189 / LMG 1036 / NCIMB 9965 / AN6), this protein is Co-chaperone protein HscB.